Consider the following 1071-residue polypeptide: SLIT-ROBO Rho GTPase-activating protein 2 (1071 aa).

The region spanning 22 to 325 (KEIRAQLTEQ…AVENLDATSD (304 aa)) is the F-BAR domain. Positions 181 to 203 (LKEAEKQEEKQIGKSVKQEDRQT) are enriched in basic and acidic residues. The interval 181 to 211 (LKEAEKQEEKQIGKSVKQEDRQTPRSPDSTA) is disordered. Position 206 is a phosphoserine (Ser206). Positions 363-401 (QSELVQRRQQLQSRLSTLKIENEEVKKTMEATLQTIQDI) form a coiled coil. 5 positions are modified to phosphoserine: Ser427, Ser500, Ser691, Ser695, and Ser724. The Rho-GAP domain maps to 489–679 (ARRSSTVRKQ…TIIIQHENIF (191 aa)). A disordered region spans residues 703-726 (THGETISAEDSTQDVTAEHHTSDD). In terms of domain architecture, SH3 spans 728–787 (CEPIEAIAKFDYVGRTARELSFKKGASLLLYQRASDDWWEGRHNGIDGLIPHQYIVVQDT). Disordered regions lie at residues 794–820 (RSSP…GASC) and 835–936 (NKQR…NHRP). Position 795 is a phosphoserine (Ser795). Composition is skewed to polar residues over residues 857–867 (LGSSLTDSSSP), 874–885 (RPSSQPIMSQNL), and 897–907 (GHGSLNSISRH). The residue at position 916 (Ser916) is a Phosphoserine. Polar residues predominate over residues 919 to 933 (IRKTATAGRSKSFNN). Arg927 bears the Symmetric dimethylarginine; by PRMT5 mark. The residue at position 930 (Ser930) is a Phosphoserine. Positions 940-968 (EVIAQDIEATMNSALNELQELERQSSAKH) form a coiled coil. The tract at residues 983 to 1012 (SPVVAPTSEPSSPLHTQLLKDPEPAFQRSA) is disordered. Residues Ser990, Ser994, Ser1013, and Ser1027 each carry the phosphoserine modification. Residues 1029 to 1071 (KMAAPVKPPATRPKPTVFPKTNATSPGVNSSASPQSTDKSCTV) are disordered. Over residues 1047–1071 (PKTNATSPGVNSSASPQSTDKSCTV) the composition is skewed to polar residues.

As to quaternary structure, homodimer. Forms a heterooligomer with SRGAP1 and SRGAP3 through its F-BAR domain. Interacts (via SH3 domain) with GPHN. Interacts (via SH3 domain) with FMNL1 (activated by RAC1); regulates the actin filament severing activity of FMNL1 and actin dynamics. Interacts (via SH3 domain) with FMNL3. Interacts with RAC1; specifically stimulates RAC1 GTPase activity. Interacts (via F-BAR domain) with HOMER1. Interacts with ROBO1 and ROBO2. Interacts with FASLG. Interacts with PRMT5. Post-translationally, methylation at Arg-927 is required for the stimulation of cell migration, dimerization and localization at the plasma membrane protrusions.

It localises to the cell membrane. Its subcellular location is the cell projection. The protein resides in the dendritic spine. It is found in the postsynaptic density. The protein localises to the postsynaptic cell membrane. It localises to the lamellipodium. Its subcellular location is the cytoplasmic vesicle. The protein resides in the phagosome. It is found in the nucleus. The protein localises to the cytoplasm. It localises to the cytosol. Functionally, postsynaptic RAC1 GTPase activating protein (GAP) that plays a key role in neuronal morphogenesis and migration mainly during development of the cerebral cortex. Regulates excitatory and inhibitory synapse maturation and density in cortical pyramidal neurons. SRGAP2/SRGAP2A limits excitatory and inhibitory synapse density through its RAC1-specific GTPase activating activity, while it promotes maturation of both excitatory and inhibitory synapses through its ability to bind to the postsynaptic scaffolding protein HOMER1 at excitatory synapses, and the postsynaptic protein GPHN at inhibitory synapses. Mechanistically, acts by binding and deforming membranes, thereby regulating actin dynamics to regulate cell migration and differentiation. Promotes cell repulsion and contact inhibition of locomotion: localizes to protrusions with curved edges and controls the duration of RAC1 activity in contact protrusions. In non-neuronal cells, may also play a role in cell migration by regulating the formation of lamellipodia and filopodia. The protein is SLIT-ROBO Rho GTPase-activating protein 2 of Rattus norvegicus (Rat).